A 148-amino-acid polypeptide reads, in one-letter code: Large ribosomal subunit protein bL9 (148 aa).

Belongs to the bacterial ribosomal protein bL9 family.

In terms of biological role, binds to the 23S rRNA. The chain is Large ribosomal subunit protein bL9 from Pseudomonas putida (strain GB-1).